A 449-amino-acid polypeptide reads, in one-letter code: Bifunctional protein GlmU (449 aa).

Positions 1–225 are pyrophosphorylase; that stretch reads MLSVAILAAG…NGELQGINNR (225 aa). Residues 7–10, lysine 21, glutamine 73, and 78–79 contribute to the UDP-N-acetyl-alpha-D-glucosamine site; these read LAAG and GT. Aspartate 103 lines the Mg(2+) pocket. Residues glycine 140, glutamate 154, asparagine 169, and asparagine 223 each contribute to the UDP-N-acetyl-alpha-D-glucosamine site. Asparagine 223 lines the Mg(2+) pocket. Residues 226–246 are linker; that stretch reads IHLSECEECIQNSIKEKHMLN. The N-acetyltransferase stretch occupies residues 247 to 449; that stretch reads GVTFINKASC…NIENWKKKKS (203 aa). 2 residues coordinate UDP-N-acetyl-alpha-D-glucosamine: arginine 328 and lysine 346. Catalysis depends on histidine 358, which acts as the Proton acceptor. UDP-N-acetyl-alpha-D-glucosamine is bound by residues tyrosine 361 and asparagine 372. The acetyl-CoA site is built by alanine 375, alanine 418, and arginine 435.

It in the N-terminal section; belongs to the N-acetylglucosamine-1-phosphate uridyltransferase family. The protein in the C-terminal section; belongs to the transferase hexapeptide repeat family. In terms of assembly, homotrimer. Mg(2+) serves as cofactor.

Its subcellular location is the cytoplasm. The catalysed reaction is alpha-D-glucosamine 1-phosphate + acetyl-CoA = N-acetyl-alpha-D-glucosamine 1-phosphate + CoA + H(+). The enzyme catalyses N-acetyl-alpha-D-glucosamine 1-phosphate + UTP + H(+) = UDP-N-acetyl-alpha-D-glucosamine + diphosphate. The protein operates within nucleotide-sugar biosynthesis; UDP-N-acetyl-alpha-D-glucosamine biosynthesis; N-acetyl-alpha-D-glucosamine 1-phosphate from alpha-D-glucosamine 6-phosphate (route II): step 2/2. It participates in nucleotide-sugar biosynthesis; UDP-N-acetyl-alpha-D-glucosamine biosynthesis; UDP-N-acetyl-alpha-D-glucosamine from N-acetyl-alpha-D-glucosamine 1-phosphate: step 1/1. Its pathway is bacterial outer membrane biogenesis; LPS lipid A biosynthesis. In terms of biological role, catalyzes the last two sequential reactions in the de novo biosynthetic pathway for UDP-N-acetylglucosamine (UDP-GlcNAc). The C-terminal domain catalyzes the transfer of acetyl group from acetyl coenzyme A to glucosamine-1-phosphate (GlcN-1-P) to produce N-acetylglucosamine-1-phosphate (GlcNAc-1-P), which is converted into UDP-GlcNAc by the transfer of uridine 5-monophosphate (from uridine 5-triphosphate), a reaction catalyzed by the N-terminal domain. In Prochlorococcus marinus (strain AS9601), this protein is Bifunctional protein GlmU.